A 197-amino-acid chain; its full sequence is Mediator of RNA polymerase II transcription subunit 10 (197 aa).

Residues 1–39 (MSSTAGTRRPRQITPTSPSPSPEPQPGATNGSSSTINVA) are disordered. A compositionally biased stretch (polar residues) spans 27 to 37 (GATNGSSSTIN).

This sequence belongs to the Mediator complex subunit 10 family. In terms of assembly, component of the Mediator complex.

Its subcellular location is the nucleus. Its function is as follows. Component of the Mediator complex, a coactivator involved in the regulated transcription of nearly all RNA polymerase II-dependent genes. Mediator functions as a bridge to convey information from gene-specific regulatory proteins to the basal RNA polymerase II transcription machinery. Mediator is recruited to promoters by direct interactions with regulatory proteins and serves as a scaffold for the assembly of a functional preinitiation complex with RNA polymerase II and the general transcription factors. This chain is Mediator of RNA polymerase II transcription subunit 10 (NUT2), found in Mycosarcoma maydis (Corn smut fungus).